Here is a 284-residue protein sequence, read N- to C-terminus: Cell wall mannoprotein 1 (284 aa).

An N-terminal signal peptide occupies residues 1-17; the sequence is MRFSALLVTLGLTGALA. Over residues 176 to 234 the composition is skewed to low complexity; the sequence is SSTGTASSSAPATETATATETSTATGTVTETATSTPVIPTGTASGSASATPSTTATPTT. The segment at 176-252 is disordered; that stretch reads SSTGTASSSA…SSTGTATAST (77 aa).

Belongs to the cell wall mannoprotein 1 family. Galactomannoprotein, glycosylated.

Its subcellular location is the secreted. It localises to the cell wall. In terms of biological role, constitutive protein of the cell wall. Antigen target of host humoral immune response. The polypeptide is Cell wall mannoprotein 1 (Aspergillus fumigatus (Neosartorya fumigata)).